Here is a 393-residue protein sequence, read N- to C-terminus: LL-diaminopimelate aminotransferase (393 aa).

Positions 14 and 41 each coordinate substrate. Residues Y71, 104–105 (AK), Y128, N174, Y205, and 233–235 (SFS) contribute to the pyridoxal 5'-phosphate site. Substrate contacts are provided by K105, Y128, and N174. An N6-(pyridoxal phosphate)lysine modification is found at K236. The pyridoxal 5'-phosphate site is built by R244 and N275. Substrate-binding residues include N275 and R369.

The protein belongs to the class-I pyridoxal-phosphate-dependent aminotransferase family. LL-diaminopimelate aminotransferase subfamily. In terms of assembly, homodimer. It depends on pyridoxal 5'-phosphate as a cofactor.

The catalysed reaction is (2S,6S)-2,6-diaminopimelate + 2-oxoglutarate = (S)-2,3,4,5-tetrahydrodipicolinate + L-glutamate + H2O + H(+). Its pathway is amino-acid biosynthesis; L-lysine biosynthesis via DAP pathway; LL-2,6-diaminopimelate from (S)-tetrahydrodipicolinate (aminotransferase route): step 1/1. Functionally, involved in the synthesis of meso-diaminopimelate (m-DAP or DL-DAP), required for both lysine and peptidoglycan biosynthesis. Catalyzes the direct conversion of tetrahydrodipicolinate to LL-diaminopimelate. The chain is LL-diaminopimelate aminotransferase from Chlamydia muridarum (strain MoPn / Nigg).